We begin with the raw amino-acid sequence, 452 residues long: UDP-N-acetylmuramoyl-tripeptide--D-alanyl-D-alanine ligase (452 aa).

An ATP-binding site is contributed by 107–113 (GSSGKTS).

Belongs to the MurCDEF family. MurF subfamily. Monomer.

It is found in the cytoplasm. It catalyses the reaction D-alanyl-D-alanine + UDP-N-acetyl-alpha-D-muramoyl-L-alanyl-gamma-D-glutamyl-meso-2,6-diaminopimelate + ATP = UDP-N-acetyl-alpha-D-muramoyl-L-alanyl-gamma-D-glutamyl-meso-2,6-diaminopimeloyl-D-alanyl-D-alanine + ADP + phosphate + H(+). It participates in cell wall biogenesis; peptidoglycan biosynthesis. Functionally, involved in cell wall formation. Catalyzes the final step in the synthesis of UDP-N-acetylmuramoyl-pentapeptide, the precursor of murein. The protein is UDP-N-acetylmuramoyl-tripeptide--D-alanyl-D-alanine ligase of Escherichia coli (strain K12).